The following is a 104-amino-acid chain: uncharacterized protein (104 aa).

Transmembrane regions (helical) follow at residues 26 to 46 (IGTGIIGVIGGILVVKGFTFF) and 70 to 90 (GLLGGIIGIATGFSITIIIAI).

It is found in the membrane. This is an uncharacterized protein from Acanthamoeba polyphaga mimivirus (APMV).